The following is a 445-amino-acid chain: Glycine betaine monooxygenase oxygenase subunit (445 aa).

Residues Trp73–Val180 form the Rieske domain. [2Fe-2S] cluster is bound by residues Cys115, His117, Cys135, and His138. Fe cation contacts are provided by His234 and His239.

Belongs to the bacterial ring-hydroxylating dioxygenase alpha subunit family. Homotrimer. The system is composed of an oxygenase subunit (BmoA) and a reductase subunit (BmoB). Maximal specific activity is obtained when the ratio of BmoA to BmoB is 5:1. [2Fe-2S] cluster is required as a cofactor. The cofactor is Fe cation.

It carries out the reaction glycine betaine + NADH + O2 + H(+) = N,N-dimethylglycine + formaldehyde + NAD(+) + H2O. Activity is absolutely dependent on the presence of BmoB. Glycine betaine monooxygenase activity is significantly enhanced by Fe(2+) and severely inhibited by heavy-metal ions, including Co(2+), Mn(2+), Zn(2+), Cu(2+) and Ag(+). Severely inhibited by EDTA. Functionally, involved in degradation of glycine betaine. Part of a Rieske-type oxygenase system that catalyzes the conversion of glycine betaine (GB) to dimethylglycine (DMG). This subunit is the terminal oxygenase component of the system. Is specific for GB, and does not show any activity on choline, L-carnitine, stachydrine, dimethylglycine or sarcosine. Activity is strictly dependent on NADH. This is Glycine betaine monooxygenase oxygenase subunit from Chromohalobacter salexigens (strain ATCC BAA-138 / DSM 3043 / CIP 106854 / NCIMB 13768 / 1H11).